The sequence spans 106 residues: UPF0145 protein AZOSEA16190 (106 aa).

This sequence belongs to the UPF0145 family.

The sequence is that of UPF0145 protein AZOSEA16190 from Aromatoleum aromaticum (strain DSM 19018 / LMG 30748 / EbN1) (Azoarcus sp. (strain EbN1)).